Reading from the N-terminus, the 484-residue chain is Glutamate--tRNA ligase (484 aa).

The 'HIGH' region motif lies at 10 to 20 (PSPTGYLHVGG). Residues 252–256 (KLSKR) carry the 'KMSKS' region motif. ATP is bound at residue K255.

It belongs to the class-I aminoacyl-tRNA synthetase family. Glutamate--tRNA ligase type 1 subfamily. Monomer.

It localises to the cytoplasm. The enzyme catalyses tRNA(Glu) + L-glutamate + ATP = L-glutamyl-tRNA(Glu) + AMP + diphosphate. Its function is as follows. Catalyzes the attachment of glutamate to tRNA(Glu) in a two-step reaction: glutamate is first activated by ATP to form Glu-AMP and then transferred to the acceptor end of tRNA(Glu). The chain is Glutamate--tRNA ligase from Mycoplasma genitalium (strain ATCC 33530 / DSM 19775 / NCTC 10195 / G37) (Mycoplasmoides genitalium).